The following is a 252-amino-acid chain: MILASLLTFATAALAFDCSDKELERYNFESIKGVHSYTTLKNTPPSQTNVTWNVGICQPISAIKDCPANSDICGVTSILRKDEKPVVSEVVSFKSDLQKAYESSDNGIKVIYKGANWGDVLVNAELNFQCDKDSQNNEFTLDQWDGTNLKLSMKTKAACITSKEDKKKEKHDNGESWGWFTWIFIFLVLFLSIYIIGGAWFQYNKGNAIDFQSALKEVVENFIELLKGLPSFGKEIIEKFTGRSNRGEYSAV.

The signal sequence occupies residues 1–15 (MILASLLTFATAALA). The MRH domain occupies 16-161 (FDCSDKELER…SMKTKAACIT (146 aa)). Topologically, residues 16–176 (FDCSDKELER…KKEKHDNGES (161 aa)) are lumenal. 3 disulfide bridges follow: Cys18-Cys57, Cys66-Cys73, and Cys130-Cys159. An N-linked (GlcNAc...) asparagine glycan is attached at Asn49. A helical transmembrane segment spans residues 177 to 197 (WGWFTWIFIFLVLFLSIYIIG). The Cytoplasmic portion of the chain corresponds to 198–252 (GAWFQYNKGNAIDFQSALKEVVENFIELLKGLPSFGKEIIEKFTGRSNRGEYSAV).

Belongs to the ATG27 family.

Its subcellular location is the cytoplasmic vesicle membrane. It is found in the golgi apparatus membrane. It localises to the mitochondrion membrane. The protein resides in the preautophagosomal structure membrane. In terms of biological role, plays a key role in autophagy. Effector of VPS34 phosphatidylinositol 3-phosphate kinase signaling. Regulates the cytoplasm to vacuole transport (Cvt) vesicle formation. Plays a role in ATG protein retrieval from the pre-autophagosomal structure (PAS) and is especially required for autophagy-dependent cycling of ATG9. Finally, plays an important role in biofilm formation and resistance to antifungal compounds such as fluconazole, itraconazole, terbinafine and caspofungin. The sequence is that of Autophagy-related protein 27 from Candida albicans (strain SC5314 / ATCC MYA-2876) (Yeast).